A 442-amino-acid polypeptide reads, in one-letter code: Trigger factor (442 aa).

One can recognise a PPIase FKBP-type domain in the interval 163 to 248 (YDRVTINYCI…IIKIEKKQEL (86 aa)).

This sequence belongs to the FKBP-type PPIase family. Tig subfamily.

It localises to the cytoplasm. The enzyme catalyses [protein]-peptidylproline (omega=180) = [protein]-peptidylproline (omega=0). In terms of biological role, involved in protein export. Acts as a chaperone by maintaining the newly synthesized protein in an open conformation. Functions as a peptidyl-prolyl cis-trans isomerase. In Buchnera aphidicola subsp. Acyrthosiphon pisum (strain APS) (Acyrthosiphon pisum symbiotic bacterium), this protein is Trigger factor (tig).